A 247-amino-acid polypeptide reads, in one-letter code: Adenosylcobinamide-GDP ribazoletransferase (247 aa).

5 consecutive transmembrane segments (helical) span residues 34 to 54 (IITF…VFMV), 59 to 79 (CGVP…TGGF), 113 to 133 (GGLA…ELAL), 138 to 158 (ILAS…LLMY), and 194 to 214 (VLLP…AIFI).

This sequence belongs to the CobS family. It depends on Mg(2+) as a cofactor.

The protein resides in the cell inner membrane. It carries out the reaction alpha-ribazole + adenosylcob(III)inamide-GDP = adenosylcob(III)alamin + GMP + H(+). The catalysed reaction is alpha-ribazole 5'-phosphate + adenosylcob(III)inamide-GDP = adenosylcob(III)alamin 5'-phosphate + GMP + H(+). The protein operates within cofactor biosynthesis; adenosylcobalamin biosynthesis; adenosylcobalamin from cob(II)yrinate a,c-diamide: step 7/7. In terms of biological role, joins adenosylcobinamide-GDP and alpha-ribazole to generate adenosylcobalamin (Ado-cobalamin). Also synthesizes adenosylcobalamin 5'-phosphate from adenosylcobinamide-GDP and alpha-ribazole 5'-phosphate. This is Adenosylcobinamide-GDP ribazoletransferase from Escherichia coli (strain 55989 / EAEC).